Here is a 280-residue protein sequence, read N- to C-terminus: Purine nucleoside phosphorylase (280 aa).

Phosphate-binding positions include Ser-15 and 55 to 56 (RH). Met-194 is a substrate binding site. Position 195 (Thr-195) interacts with phosphate. Residue 218 to 220 (DLD) coordinates substrate.

This sequence belongs to the PNP/MTAP phosphorylase family. MTAP subfamily. In terms of assembly, homohexamer. Dimer of a homotrimer.

It carries out the reaction a purine D-ribonucleoside + phosphate = a purine nucleobase + alpha-D-ribose 1-phosphate. The protein operates within purine metabolism; purine nucleoside salvage. In terms of biological role, purine nucleoside phosphorylase involved in purine salvage. The polypeptide is Purine nucleoside phosphorylase (Streptomyces coelicolor (strain ATCC BAA-471 / A3(2) / M145)).